The following is a 164-amino-acid chain: UPF0304 protein HSM_1818 (164 aa).

The protein belongs to the UPF0304 family.

This chain is UPF0304 protein HSM_1818, found in Histophilus somni (strain 2336) (Haemophilus somnus).